Consider the following 257-residue polypeptide: Imidazole glycerol phosphate synthase subunit HisF (257 aa).

Residues aspartate 12 and aspartate 131 contribute to the active site.

This sequence belongs to the HisA/HisF family. In terms of assembly, heterodimer of HisH and HisF.

It is found in the cytoplasm. The enzyme catalyses 5-[(5-phospho-1-deoxy-D-ribulos-1-ylimino)methylamino]-1-(5-phospho-beta-D-ribosyl)imidazole-4-carboxamide + L-glutamine = D-erythro-1-(imidazol-4-yl)glycerol 3-phosphate + 5-amino-1-(5-phospho-beta-D-ribosyl)imidazole-4-carboxamide + L-glutamate + H(+). Its pathway is amino-acid biosynthesis; L-histidine biosynthesis; L-histidine from 5-phospho-alpha-D-ribose 1-diphosphate: step 5/9. In terms of biological role, IGPS catalyzes the conversion of PRFAR and glutamine to IGP, AICAR and glutamate. The HisF subunit catalyzes the cyclization activity that produces IGP and AICAR from PRFAR using the ammonia provided by the HisH subunit. This is Imidazole glycerol phosphate synthase subunit HisF from Paraburkholderia xenovorans (strain LB400).